Consider the following 224-residue polypeptide: UPF0758 protein VF_0126 (224 aa).

One can recognise an MPN domain in the interval 102–224 (ALTSPEHTKR…IVSFAERGWI (123 aa)). Residues H173, H175, and D186 each coordinate Zn(2+). Positions 173 to 186 (HNHPSGVAEPSQAD) match the JAMM motif motif.

The protein belongs to the UPF0758 family.

The chain is UPF0758 protein VF_0126 from Aliivibrio fischeri (strain ATCC 700601 / ES114) (Vibrio fischeri).